A 235-amino-acid chain; its full sequence is UPF0758 protein Swol_1642 (235 aa).

Positions 109–235 constitute an MPN domain; it reads IIKSPEDVQE…YCSLKARGLI (127 aa). Zn(2+)-binding residues include His-184, His-186, and Asp-197. Residues 184–197 carry the JAMM motif motif; that stretch reads HNHPSGDPTPSQED.

This sequence belongs to the UPF0758 family.

This Syntrophomonas wolfei subsp. wolfei (strain DSM 2245B / Goettingen) protein is UPF0758 protein Swol_1642.